The following is a 103-amino-acid chain: MGFYGNLNHMEKRKSGYVTQKQFNDFKNSNNQRLIKIENTLVSQGEQISQLIKVSILQGEQINKLTETVEKQGEQIQTQGETLKLILETLQVINKRLDRLESK.

This sequence belongs to the UPF0134 family.

This chain is UPF0134 protein MPN_484, found in Mycoplasma pneumoniae (strain ATCC 29342 / M129 / Subtype 1) (Mycoplasmoides pneumoniae).